The primary structure comprises 445 residues: Dolichyl-diphosphooligosaccharide--protein glycosyltransferase 48 kDa subunit (445 aa).

The N-terminal stretch at 1–20 is a signal peptide; it reads MRWLPGLLLIASIGFHQSLA. Residues 21–405 are Lumenal-facing; it reads DRVLVLGETA…YERFIRSAYP (385 aa). Residues 406–426 traverse the membrane as a helical segment; that stretch reads YYASSFSMMAGLVLFSIVYLY. Residues 427 to 445 lie on the Cytoplasmic side of the membrane; that stretch reads HKDTPVKGAKVLDSEKKKN.

This sequence belongs to the DDOST 48 kDa subunit family. Component of the oligosaccharyltransferase (OST) complex.

It is found in the endoplasmic reticulum membrane. It functions in the pathway protein modification; protein glycosylation. In terms of biological role, subunit of the oligosaccharyl transferase (OST) complex that catalyzes the initial transfer of a defined glycan (Glc(3)Man(9)GlcNAc(2) in eukaryotes) from the lipid carrier dolichol-pyrophosphate to an asparagine residue within an Asn-X-Ser/Thr consensus motif in nascent polypeptide chains, the first step in protein N-glycosylation. N-glycosylation occurs cotranslationally and the complex associates with the Sec61 complex at the channel-forming translocon complex that mediates protein translocation across the endoplasmic reticulum (ER). All subunits are required for a maximal enzyme activity. Required for the assembly of both SST3A- and SS3B-containing OST complexes. Required for normal lifespan. In Caenorhabditis elegans, this protein is Dolichyl-diphosphooligosaccharide--protein glycosyltransferase 48 kDa subunit.